The primary structure comprises 426 residues: Gamma-glutamyl phosphate reductase (426 aa).

The protein belongs to the gamma-glutamyl phosphate reductase family.

The protein resides in the cytoplasm. The catalysed reaction is L-glutamate 5-semialdehyde + phosphate + NADP(+) = L-glutamyl 5-phosphate + NADPH + H(+). It functions in the pathway amino-acid biosynthesis; L-proline biosynthesis; L-glutamate 5-semialdehyde from L-glutamate: step 2/2. Its function is as follows. Catalyzes the NADPH-dependent reduction of L-glutamate 5-phosphate into L-glutamate 5-semialdehyde and phosphate. The product spontaneously undergoes cyclization to form 1-pyrroline-5-carboxylate. In Delftia acidovorans (strain DSM 14801 / SPH-1), this protein is Gamma-glutamyl phosphate reductase.